Reading from the N-terminus, the 165-residue chain is MSHPALTQLRALRYFKEIPVLDPQLLDWLLLEDSMTKRFEQQGKTVSVTMIREGFVEQNEIPEELPLLPKESRYWLREILLCADGEPWLAGRTVVPVSTLSGPELALQKLGKTPLGRYLFTSSTLTRDFIEIGRDAGLWGRRSRLRLSGKPLLLTELFLPASPLY.

4 residues coordinate substrate: Met35, Arg77, Leu115, and Glu156.

The protein belongs to the UbiC family. Monomer.

It is found in the cytoplasm. The enzyme catalyses chorismate = 4-hydroxybenzoate + pyruvate. It participates in cofactor biosynthesis; ubiquinone biosynthesis. Removes the pyruvyl group from chorismate, with concomitant aromatization of the ring, to provide 4-hydroxybenzoate (4HB) for the ubiquinone pathway. The protein is Chorismate pyruvate-lyase of Escherichia coli O7:K1 (strain IAI39 / ExPEC).